We begin with the raw amino-acid sequence, 239 residues long: UPF0173 metal-dependent hydrolase rrnAC0300 (239 aa).

Belongs to the UPF0173 family.

The sequence is that of UPF0173 metal-dependent hydrolase rrnAC0300 from Haloarcula marismortui (strain ATCC 43049 / DSM 3752 / JCM 8966 / VKM B-1809) (Halobacterium marismortui).